A 366-amino-acid polypeptide reads, in one-letter code: Chorismate synthase (366 aa).

2 residues coordinate NADP(+): arginine 48 and arginine 54. FMN-binding positions include 125 to 127 (RSS), 238 to 239 (NA), glycine 278, 293 to 297 (KPTSS), and arginine 319.

The protein belongs to the chorismate synthase family. Homotetramer. Requires FMNH2 as cofactor.

It catalyses the reaction 5-O-(1-carboxyvinyl)-3-phosphoshikimate = chorismate + phosphate. It functions in the pathway metabolic intermediate biosynthesis; chorismate biosynthesis; chorismate from D-erythrose 4-phosphate and phosphoenolpyruvate: step 7/7. In terms of biological role, catalyzes the anti-1,4-elimination of the C-3 phosphate and the C-6 proR hydrogen from 5-enolpyruvylshikimate-3-phosphate (EPSP) to yield chorismate, which is the branch point compound that serves as the starting substrate for the three terminal pathways of aromatic amino acid biosynthesis. This reaction introduces a second double bond into the aromatic ring system. The chain is Chorismate synthase from Laribacter hongkongensis (strain HLHK9).